Consider the following 378-residue polypeptide: D-alanine--D-alanine ligase (378 aa).

An ATP-grasp domain is found at 157 to 368 (KVVFESAGLS…YGDLIDELIH (212 aa)). Residue 189-244 (VDKLGFPVFVKPARAGSSMGISKVDSMEGLDAAIDEARRHDLKLVIEAGIVGREIE) coordinates ATP. The Mg(2+) site is built by Asp322, Glu335, and Asn337.

It belongs to the D-alanine--D-alanine ligase family. Mg(2+) serves as cofactor. It depends on Mn(2+) as a cofactor.

It localises to the cytoplasm. The enzyme catalyses 2 D-alanine + ATP = D-alanyl-D-alanine + ADP + phosphate + H(+). It participates in cell wall biogenesis; peptidoglycan biosynthesis. Its function is as follows. Cell wall formation. In Paenarthrobacter aurescens (strain TC1), this protein is D-alanine--D-alanine ligase.